The primary structure comprises 130 residues: Lysozyme C (130 aa).

The C-type lysozyme domain maps to 1–130; that stretch reads KTYERCELAR…VSPWIRDCGL (130 aa). Disulfide bonds link Cys-6/Cys-128, Cys-30/Cys-116, Cys-65/Cys-81, and Cys-77/Cys-95. Catalysis depends on residues Glu-35 and Asp-53.

Belongs to the glycosyl hydrolase 22 family. In terms of assembly, monomer.

Its subcellular location is the secreted. The catalysed reaction is Hydrolysis of (1-&gt;4)-beta-linkages between N-acetylmuramic acid and N-acetyl-D-glucosamine residues in a peptidoglycan and between N-acetyl-D-glucosamine residues in chitodextrins.. Lysozymes have primarily a bacteriolytic function; those in tissues and body fluids are associated with the monocyte-macrophage system and enhance the activity of immunoagents. The chain is Lysozyme C (LYZ) from Chelonia mydas (Green sea-turtle).